A 350-amino-acid polypeptide reads, in one-letter code: S-adenosylmethionine:tRNA ribosyltransferase-isomerase (350 aa).

Belongs to the QueA family. In terms of assembly, monomer.

It is found in the cytoplasm. It catalyses the reaction 7-aminomethyl-7-carbaguanosine(34) in tRNA + S-adenosyl-L-methionine = epoxyqueuosine(34) in tRNA + adenine + L-methionine + 2 H(+). The protein operates within tRNA modification; tRNA-queuosine biosynthesis. In terms of biological role, transfers and isomerizes the ribose moiety from AdoMet to the 7-aminomethyl group of 7-deazaguanine (preQ1-tRNA) to give epoxyqueuosine (oQ-tRNA). The sequence is that of S-adenosylmethionine:tRNA ribosyltransferase-isomerase from Bacillus cereus (strain Q1).